Consider the following 84-residue polypeptide: Large ribosomal subunit protein bL31B (84 aa).

Belongs to the bacterial ribosomal protein bL31 family. Type B subfamily. Part of the 50S ribosomal subunit.

The protein is Large ribosomal subunit protein bL31B of Alkalilimnicola ehrlichii (strain ATCC BAA-1101 / DSM 17681 / MLHE-1).